The following is a 404-amino-acid chain: Multidrug resistance protein MdtG (404 aa).

Helical transmembrane passes span 19-39 (LGCF…PLYV), 56-76 (LVFS…GGLA), 90-110 (LGMA…QFLI), 113-133 (ALLG…ATQV), 144-164 (TLST…GLLA), 171-191 (PVFF…FFFI), 222-242 (LFVT…ILTL), 254-274 (IAFI…LSAP), 288-308 (ILIV…FVQT), 317-337 (FLLG…LVYN), and 376-396 (AVFC…WNSL).

It belongs to the major facilitator superfamily. DHA1 family. MdtG (TC 2.A.1.2.20) subfamily.

The protein localises to the cell inner membrane. The protein is Multidrug resistance protein MdtG of Salmonella schwarzengrund (strain CVM19633).